A 353-amino-acid polypeptide reads, in one-letter code: Lipase chaperone (353 aa).

The chain crosses the membrane as a helical span at residues 12–32 (IVLYLILGCVVVCGVWYSFDV).

Belongs to the lipase chaperone family.

It is found in the cell inner membrane. Functionally, may be involved in the folding of the extracellular lipase during its passage through the periplasm. The polypeptide is Lipase chaperone (Xylella fastidiosa (strain M23)).